Consider the following 118-residue polypeptide: Large ribosomal subunit protein uL24 (118 aa).

Belongs to the universal ribosomal protein uL24 family. Part of the 50S ribosomal subunit.

In terms of biological role, one of two assembly initiator proteins, it binds directly to the 5'-end of the 23S rRNA, where it nucleates assembly of the 50S subunit. Its function is as follows. One of the proteins that surrounds the polypeptide exit tunnel on the outside of the subunit. The sequence is that of Large ribosomal subunit protein uL24 from Synechococcus sp. (strain CC9605).